A 538-amino-acid chain; its full sequence is Atos homolog protein B (538 aa).

The span at Met-1–Pro-18 shows a compositional bias: low complexity. 4 disordered regions span residues Met-1–Gly-103, Asn-153–Thr-185, Gly-197–Pro-300, and Ser-323–Pro-342. Over residues His-227–Cys-238 the composition is skewed to pro residues. Residues Ser-254 and Ser-255 each carry the phosphoserine modification. The span at Ser-323–Pro-334 shows a compositional bias: low complexity. Positions Leu-348–Thr-430 are required for macropage invasion. The tract at residues Gln-436–Val-444 is transactivation domain 1 (TAD1).

This sequence belongs to the ATOS family.

The protein resides in the nucleus. Transcription regulator that may syncronize transcriptional and translational programs. In Pongo abelii (Sumatran orangutan), this protein is Atos homolog protein B.